Reading from the N-terminus, the 701-residue chain is L-glutamate oxidase precursor (701 aa).

The signal sequence occupies residues 1-14; sequence MTTDTARRHTGAER. FAD is bound by residues Ala69, Glu88, Ala89, Arg97, Met123, Arg124, Met354, and Ser409. The propeptide occupies 481–520; it reads LALPQSVRNLPTGLLGAHPSVDESRIGEEQVEYYRNSELR. Residues Glu645, Trp653, and Ile654 each contribute to the FAD site. The propeptide occupies 684-701; sequence RRGAAAATEPMREEALTS.

This sequence belongs to the flavin monoamine oxidase family. LGOX subfamily. The LGOX precursor forms homodimers. The mature enzyme is a heterohexamer composed of 2 alpha chains, 2 beta chains and 2 gamma chains (alpha2beta2gamma2). The cofactor is FAD. In terms of processing, the precursor form is proteolytically cleaved by an endopeptidase into alpha, beta and gamma chains, which form the stable mature enzyme. Activation by proteolysis occurs after secretion.

It is found in the secreted. It carries out the reaction L-glutamate + O2 + H2O = H2O2 + 2-oxoglutarate + NH4(+). Produced as a single polypeptide precursor and is activated by proteolytic cleavage. The LGOX precursor is an active enzyme, but it exhibits lower catalytic efficiency and lower thermostability compared with the mature hexameric LGOX. The mature form is strongly inhibited by p-chloromercuribenzoate, but not by CuCl(2), EDTA and diethyldithiocarbamate. In terms of biological role, catalyzes the oxidative deamination of L-glutamate to 2-ketoglutarate along with the production of ammonia and hydrogen peroxide. Shows strict substrate specificity for L-glutamate, and exhibits only very weak activity with L-aspartate. The protein is L-glutamate oxidase precursor of Streptomyces sp.